We begin with the raw amino-acid sequence, 405 residues long: Indoleamine 2,3-dioxygenase 2 (405 aa).

A heme-binding site is contributed by H347.

Belongs to the indoleamine 2,3-dioxygenase family. The cofactor is heme. As to expression, expressed mainly in antigen-presenting immune cells, liver, kidney, brain, and placenta. Highly expressed in kidney, followed by epididymis and liver (at protein level). Detected in the tails of the spermatozoa in the testis and in the kidney tubules (at protein level). Constitutively expressed in brain.

The enzyme catalyses L-tryptophan + O2 = N-formyl-L-kynurenine. It participates in amino-acid degradation; L-tryptophan degradation via kynurenine pathway; L-kynurenine from L-tryptophan: step 1/2. Its activity is regulated as follows. Activity is inhibited by D-1MT (1-methyl-D-tryptophan) and MTH-trp (methylthiohydantoin-DL-tryptophan) but not L-1MT (1-methyl-L-tryptophan). Its function is as follows. Catalyzes the first and rate-limiting step in the kynurenine pathway of tryptophan catabolism. Involved in immune regulation. This chain is Indoleamine 2,3-dioxygenase 2, found in Mus musculus (Mouse).